The chain runs to 150 residues: Avidin-related protein 3 (150 aa).

Residues 1 to 24 (MVHTTSPLLLLLLLSLALVAPSLS) form the signal peptide. The Avidin-like domain occupies 26–147 (RKCSLTGKWT…GYNNFTRQRT (122 aa)). The cysteines at positions 28 and 105 are disulfide-linked. Biotin contacts are provided by Asn36, Ser40, Tyr57, Thr59, and Asp63. N-linked (GlcNAc...) asparagine glycosylation is present at Asn93. 3 residues coordinate biotin: Ser95, Ser99, and Asn140. Asn141 carries N-linked (GlcNAc...) asparagine glycosylation.

It belongs to the avidin/streptavidin family. As to quaternary structure, homotetramer. Post-translationally, glycosylated.

It is found in the secreted. Forms a strong non-covalent specific complex with biotin. This is Avidin-related protein 3 (AVR3) from Gallus gallus (Chicken).